We begin with the raw amino-acid sequence, 658 residues long: Biosynthetic arginine decarboxylase (658 aa).

Position 127 is an N6-(pyridoxal phosphate)lysine (K127). 307 to 317 (FDVGGGLGVDY) contributes to the substrate binding site.

Belongs to the Orn/Lys/Arg decarboxylase class-II family. SpeA subfamily. As to quaternary structure, homotetramer. Pyridoxal 5'-phosphate serves as cofactor. Requires Mg(2+) as cofactor. In terms of processing, processed post-translationally to a 70 kDa mature form. The N-terminus is blocked.

It localises to the periplasm. The enzyme catalyses L-arginine + H(+) = agmatine + CO2. It participates in amine and polyamine biosynthesis; agmatine biosynthesis; agmatine from L-arginine: step 1/1. Down-regulated by polyamine end products putrescine and spermidine. Functionally, catalyzes the biosynthesis of agmatine from arginine. This Escherichia coli (strain K12) protein is Biosynthetic arginine decarboxylase (speA).